The following is a 363-amino-acid chain: 3-isopropylmalate dehydrogenase (363 aa).

78–89 is an NAD(+) binding site; the sequence is GPKWGTGAVRPE. Residues Arg96, Arg106, Arg135, and Asp224 each coordinate substrate. Residues Asp224, Asp249, and Asp253 each contribute to the Mg(2+) site. 288 to 299 contributes to the NAD(+) binding site; the sequence is GSAPDLPANKVN.

The protein belongs to the isocitrate and isopropylmalate dehydrogenases family. Homodimer. Requires Mg(2+) as cofactor. It depends on Mn(2+) as a cofactor.

It is found in the cytoplasm. It catalyses the reaction (2R,3S)-3-isopropylmalate + NAD(+) = 4-methyl-2-oxopentanoate + CO2 + NADH. The protein operates within amino-acid biosynthesis; L-leucine biosynthesis; L-leucine from 3-methyl-2-oxobutanoate: step 3/4. Functionally, catalyzes the oxidation of 3-carboxy-2-hydroxy-4-methylpentanoate (3-isopropylmalate) to 3-carboxy-4-methyl-2-oxopentanoate. The product decarboxylates to 4-methyl-2 oxopentanoate. The chain is 3-isopropylmalate dehydrogenase (LEU2) from Cyberlindnera jadinii (Torula yeast).